The following is a 34-amino-acid chain: Photosystem II reaction center protein M (34 aa).

Residues 7–27 form a helical membrane-spanning segment; that stretch reads GFVASLMFILVPAIFLIVLYI.

It belongs to the PsbM family. As to quaternary structure, PSII is composed of 1 copy each of membrane proteins PsbA, PsbB, PsbC, PsbD, PsbE, PsbF, PsbH, PsbI, PsbJ, PsbK, PsbL, PsbM, PsbT, PsbX, PsbY, PsbZ, Psb30/Ycf12, peripheral proteins PsbO, CyanoQ (PsbQ), PsbU, PsbV and a large number of cofactors. It forms dimeric complexes.

Its subcellular location is the cellular thylakoid membrane. Functionally, one of the components of the core complex of photosystem II (PSII). PSII is a light-driven water:plastoquinone oxidoreductase that uses light energy to abstract electrons from H(2)O, generating O(2) and a proton gradient subsequently used for ATP formation. It consists of a core antenna complex that captures photons, and an electron transfer chain that converts photonic excitation into a charge separation. This subunit is found at the monomer-monomer interface. In Synechococcus sp. (strain CC9605), this protein is Photosystem II reaction center protein M.